We begin with the raw amino-acid sequence, 216 residues long: UPF0502 protein VPA1223 (216 aa).

This sequence belongs to the UPF0502 family.

This is UPF0502 protein VPA1223 from Vibrio parahaemolyticus serotype O3:K6 (strain RIMD 2210633).